Reading from the N-terminus, the 662-residue chain is MKPLEKFLKKQTSQLAGRAVTGGPGGGPGCCGGPGGGGGPGGGGGPAGGLRPLQRRQSVSRLLLPAFLREPPTEPGLEPPVEEEGGEPLGVSEEPGSGGPCWLQLEEVPGPGPIGSGVPLRSPSSYSSDELSPGEPLASPPWAPLGAPERPEHLLNRVLERLAGGTTRDSSASDILLDDIVLTHSLFLPTEKFLQELHQYFVQSRNVEGPEGLGRKQACLALLLHFLDTYQGLLQEEEGAGHIIKELYLLIMKDESLYQDLREDTLRLHQLVETVELKIPEESQPPSKQVKPLFRHFRRIDSCLQTRVAFRGSDEIFCRVYMPDHSYVTIRSRLSASVQDILGSVTEKLQYSEEPAEREDALILVAVASSGEKVLLQPTEDCVFTTLGINSHLFACTRDSYEALVPLPEEVQVSPGDTEIHRVEPEDVANHLTAFHWELFRCVHELEFVDYVFHGERGRRETANLELLLQRCSEVTHWVATEVLLCEAPGKRVQLLKKFIKIAAICKQNQDLLSFYAVVMGLDNAAVSRLRLTWEKLPGKFKNLFRKFEGLTDPCRNHKSYREVISKMKPPLIPFVPLILKDLTFLHEGSKTLVDGLVNIEKLHSVAEKVRTIRKYRSRPLCLDMEASPHHLQTKAYVRQFQVIDNQNHLFELSYKLEANSQ.

The interval 1-149 is disordered; sequence MKPLEKFLKK…PPWAPLGAPE (149 aa). Residues 20–48 show a composition bias toward gly residues; sequence VTGGPGGGPGCCGGPGGGGGPGGGGGPAG. Composition is skewed to low complexity over residues 49 to 65 and 116 to 133; these read GLRPLQRRQSVSRLLLP and SGVPLRSPSSYSSDELSP. The Ras-GEF domain occupies 424–660; that stretch reads EPEDVANHLT…FELSYKLEAN (237 aa).

In terms of biological role, probable guanine nucleotide exchange factor (GEF). The sequence is that of Rap guanine nucleotide exchange factor-like 1 (Rapgefl1) from Mus musculus (Mouse).